A 326-amino-acid chain; its full sequence is MRPLMLQGHERSITQIKYNREGDLLFSCSKDQKPNVWYSLNGERLGTYDGHQGAVWCLDVDWESRKLITGAGDMTTKIWDVEYGTVIASIPTKSSVRTSNFSFSGNQAAYSTDKAMGQSCELFLIDVRNADSSLSEQEPTLRIPMTESKITSMLWGPLDETIITGHDNGNIAIWDIRKGQKVVDSGTDHSAGINDMQLSKDGTMFVTASKDTTAKLFDSESLMCLKTYKTERPVNSAAISPIMDHVVLGGGQDAMEVTTTSTKAGKFDSRFFHLIYEEEFARLKGHFGPINSLAFHPDGKSYASGGEDGFVRVQTFDSTYFENIFE.

WD repeat units follow at residues Gly-8–Thr-47, Gly-50–Ser-89, Met-145–Asp-184, Asp-188–Thr-227, and Gly-285–Glu-326.

This sequence belongs to the eIF-3 subunit I family. As to quaternary structure, component of the eukaryotic translation initiation factor 3 (eIF-3) complex. The eIF-3 complex interacts with pix.

Its subcellular location is the cytoplasm. Component of the eukaryotic translation initiation factor 3 (eIF-3) complex, which is involved in protein synthesis of a specialized repertoire of mRNAs and, together with other initiation factors, stimulates binding of mRNA and methionyl-tRNAi to the 40S ribosome. The eIF-3 complex specifically targets and initiates translation of a subset of mRNAs involved in cell proliferation. This Drosophila erecta (Fruit fly) protein is Eukaryotic translation initiation factor 3 subunit I.